Consider the following 475-residue polypeptide: Mitochondrial adenyl nucleotide antiporter SLC25A24 (475 aa).

The regulatory N-terminal domain stretch occupies residues 1-173 (MLRWLRGFVL…RFWKHSTGID (173 aa)). At 1–197 (MLRWLRGFVL…ERKSGQWWRQ (197 aa)) the chain is on the mitochondrial intermembrane side. 4 EF-hand domains span residues 19–54 (EPPTRYETLFQALDRNGDGVVDIRELQEGLKSLGIP), 55–88 (LGQDAEEKIFTTGDVNKDGKLDFEEFMKYLKDHE), 86–121 (DHEKKMKLAFKSLDKNNDGKIEASEIVQSLQTLGLT), and 122–157 (ISEQQAELILQSIDADGTMTVDWNEWRDYFLFNPVA). Residues D32, N34, D36, V38, E43, D68, N70, D72, K74, E79, D99, N101, D103, K105, E110, D135, D137, T139, T141, and E146 each contribute to the Ca(2+) site. The tract at residues 159 to 168 (IEEIIRFWKH) is linker region. The tract at residues 174 to 475 (IGDSLTIPDE…MKQTLGVTQK (302 aa)) is C-terminal transmembrane transporter domain. Solcar repeat units follow at residues 192–276 (GQWW…YKKL), 284–369 (IGTF…LKSH), and 381–469 (PGVL…MKQT). Residues 198 to 215 (LLAGGIAGAVSRTSTAPL) form a helical membrane-spanning segment. Over 216-250 (DRLKVMMQVHGSKSMNIFGGFRQMIKEGGVRSLWR) the chain is Mitochondrial matrix. A helical membrane pass occupies residues 251–270 (GNGTNVIKIAPETAVKFWVY). Residues 271 to 293 (EQYKKLLTEEGQKIGTFERFISG) are Mitochondrial intermembrane-facing. Residues 294 to 307 (SMAGATAQTFIYPM) traverse the membrane as a helical segment. Residues 308-343 (EVMKTRLAVGKTGQYSGIYDCAKKILKYEGFGAFYK) are Mitochondrial matrix-facing. K318 bears the N6-acetyllysine; alternate mark. N6-succinyllysine; alternate is present on K318. K334 is subject to N6-acetyllysine. The chain crosses the membrane as a helical span at residues 344–363 (GYVPNLLGIIPYAGIDLAVY). The Mitochondrial intermembrane segment spans residues 364–386 (ELLKSHWLDNFAKDSVNPGVLVL). A helical membrane pass occupies residues 387-404 (LGCGALSSTCGQLASYPL). Topologically, residues 405-443 (ALVRTRMQAQAMLEGAPQLNMVGLFRRIISKEGLPGLYR) are mitochondrial matrix. K435 carries the post-translational modification N6-acetyllysine; alternate. Residue K435 is modified to N6-succinyllysine; alternate. Residues 444 to 463 (GITPNFMKVLPAVGISYVVY) traverse the membrane as a helical segment. At 464–475 (ENMKQTLGVTQK) the chain is on the mitochondrial intermembrane side.

The protein belongs to the mitochondrial carrier (TC 2.A.29) family. As to quaternary structure, monomer. As to expression, mainly expressed in colon. Also expressed in the small intestine proximal to the ileum. Weakly expressed in kidney but not in the liver.

The protein resides in the mitochondrion inner membrane. It localises to the peroxisome membrane. The enzyme catalyses Mg(2+)(out) + phosphate(in) + ATP(out) = Mg(2+)(in) + phosphate(out) + ATP(in). The catalysed reaction is ADP(out) + phosphate(in) + H(+)(out) = ADP(in) + phosphate(out) + H(+)(in). It carries out the reaction AMP(out) + phosphate(in) = AMP(in) + phosphate(out). It catalyses the reaction phosphate(in) + ATP(out) + 2 H(+)(out) = phosphate(out) + ATP(in) + 2 H(+)(in). The enzyme catalyses dADP(in) + ADP(out) = dADP(out) + ADP(in). The catalysed reaction is Mg(2+)(in) + ADP(out) + ATP(in) + H(+)(out) = Mg(2+)(out) + ADP(in) + ATP(out) + H(+)(in). It carries out the reaction ADP(out) + diphosphate(in) = ADP(in) + diphosphate(out). It catalyses the reaction dAMP(in) + ADP(out) + H(+)(out) = dAMP(out) + ADP(in) + H(+)(in). The enzyme catalyses 3'-AMP(in) + ADP(out) + H(+)(out) = 3'-AMP(out) + ADP(in) + H(+)(in). The catalysed reaction is dAMP(out) + phosphate(in) = dAMP(in) + phosphate(out). It carries out the reaction 3'-AMP(out) + phosphate(in) = 3'-AMP(in) + phosphate(out). It catalyses the reaction dADP(out) + phosphate(in) + H(+)(out) = dADP(in) + phosphate(out) + H(+)(in). Activated by an increase in cytosolic calcium levels that induce a conformational change of the N-terminal regulatory domain, uncapping the channel and allowing transport. Inhibited by bathophenanthroline, mersalyl, p-hydroxymercuribenzoate, bromcresol purple and tannic acid. Functionally, electroneutral antiporter that mediates the transport of adenyl nucleotides through the inner mitochondrial membrane. Originally identified as an ATP-magnesium/inorganic phosphate antiporter, it also acts as a broad specificity adenyl nucleotide antiporter. By regulating the mitochondrial matrix adenyl nucleotide pool could adapt to changing cellular energetic demands and indirectly regulate adenyl nucleotide-dependent metabolic pathways. In vitro, a low activity is also observed with guanyl and pyrimidine nucleotides. May play a role in protecting cells against oxidative stress-induced cell death, by buffering calcium levels in the mitochondrial matrix through the formation of calcium-phosphate precipitates. The chain is Mitochondrial adenyl nucleotide antiporter SLC25A24 (SLC25A24) from Oryctolagus cuniculus (Rabbit).